Reading from the N-terminus, the 49-residue chain is uncharacterized protein (49 aa).

It belongs to the ELIP/psbS family.

The protein localises to the plastid. It localises to the cyanelle. Possible role in chlorophyll and/or carotenoid binding. This is an uncharacterized protein from Cyanophora paradoxa.